The chain runs to 579 residues: Glypican-3 (579 aa).

An N-terminal signal peptide occupies residues 1–24 (MAGTVRTACLLVAMLLGLGCLGQA). Glutamine 25 is modified (pyrrolidone carboxylic acid). 7 disulfide bridges follow: cysteine 34/cysteine 71, cysteine 64/cysteine 261, cysteine 72/cysteine 264, cysteine 196/cysteine 348, cysteine 251/cysteine 284, cysteine 273/cysteine 421, and cysteine 277/cysteine 409. Residues asparagine 123 and asparagine 240 are each glycosylated (N-linked (GlcNAc...) asparagine). At serine 351 the chain carries Phosphoserine. An N-linked (GlcNAc...) asparagine glycan is attached at asparagine 417. O-linked (Xyl...) (glycosaminoglycan) serine glycosylation is found at serine 494 and serine 508. The disordered stretch occupies residues 533-552 (DAPGNKQHGNQKDNEITTSH). Serine 553 carries GPI-anchor amidated serine lipidation. The propeptide at 554–579 (VGNMPSPLKILISVAIYVACFFFLVH) is removed in mature form.

This sequence belongs to the glypican family. In terms of assembly, heterodimer; disulfide-linked. Cleavage by a furin-like convertase results in production of alpha and beta chains which form a disulfide-linked heterodimer. Interacts with DPP4. Interacts with FGF2. Interacts with WNT5A. Also interacts with WNT3A and WNT7B. Interacts with hedgehog protein SHH; the heparan sulfate chains are not required for the interaction. Also interacts with hedgehog protein IHH. Interacts with CD81. Interacts with Wnt receptors FZD4, FZD7 and FZD8; the heparan sulfate chains are required for the interaction. O-glycosylated; contains heparan sulfate and/or chondroitin sulfate. In terms of processing, cleaved intracellularly by a furin-like convertase to generate 2 subunits, alpha and beta, which remain associated through disulfide bonds and are associated with the cell surface via the GPI-anchor. This processing is essential for its role in inhibition of hedgehog signaling. A second proteolytic event may result in cleavage of the protein on the cell surface, separating it from the GPI-anchor and leading to its shedding from the cell surface. In terms of tissue distribution, in the developing limb, absent from the apical epidermal ridge at 11 dpc but highly expressed in the underlying mesenchyme. Expression in the mesenchyme at this stage is asymmetric with highest levels in the regions of the distal mesenchyme within the progress zone and within the proximal anterior and posterior limb bud. At later developmental stages including 12.5 and 13.5 dpc, expression is restricted to the interdigital webs and the regions of chondrocytic differentiation of the developing bones. In the embryonic kidney, expressed in both the ureteric bud and mesenchymal cells as early as 13.5 dpc. Expression at 16.5 dpc is similar to that at 13.5 dpc but decreases by 18.5 dpc.

The protein resides in the cell membrane. Its function is as follows. Cell surface proteoglycan. Negatively regulates the hedgehog signaling pathway when attached via the GPI-anchor to the cell surface by competing with the hedgehog receptor PTC1 for binding to hedgehog proteins. Binding to the hedgehog protein SHH triggers internalization of the complex by endocytosis and its subsequent lysosomal degradation. Positively regulates the canonical Wnt signaling pathway by binding to the Wnt receptor Frizzled and stimulating the binding of the Frizzled receptor to Wnt ligands. Positively regulates the non-canonical Wnt signaling pathway. Binds to CD81 which decreases the availability of free CD81 for binding to the transcriptional repressor HHEX, resulting in nuclear translocation of HHEX and transcriptional repression. Inhibits the dipeptidyl peptidase activity of DPP4. Plays a role in limb patterning and skeletal development by controlling the cellular response to BMP4. Modulates the effects of growth factors BMP2, BMP7 and FGF7 on renal branching morphogenesis. Required for coronary vascular development. Plays a role in regulating cell movements during gastrulation. The polypeptide is Glypican-3 (Gpc3) (Mus musculus (Mouse)).